A 273-amino-acid chain; its full sequence is Outer surface protein A (273 aa).

Residues 1 to 16 (MKKYLLGIGLILALIA) form the signal peptide. Residue Cys17 is the site of N-palmitoyl cysteine attachment. Cys17 carries S-diacylglycerol cysteine lipidation.

It belongs to the OspA lipoprotein family.

The protein localises to the cell outer membrane. It is found in the cell surface. The protein is Outer surface protein A of Borreliella burgdorferi (Lyme disease spirochete).